A 215-amino-acid polypeptide reads, in one-letter code: LysM and putative peptidoglycan-binding domain-containing protein 2 (215 aa).

Residues 1–40 (MADLSPAPALREGGPRAHRPSAPSPPPRSRSTSEPEEAEL) are disordered. An N-acetylalanine modification is found at A2. Residues S5, S24, S33, and S57 each carry the phosphoserine modification. The 45-residue stretch at 71 to 115 (VEHRVRAGDTLQGIALKYGVTMEQIKRANKLFTNDCIFLKKTLSI) folds into the LysM domain. Disordered regions lie at residues 135–176 (ESET…EVSA) and 195–215 (RKLKEESRDEESPYAASLYHS). The segment covering 145–156 (QEEEPVVSEEEL) has biased composition (acidic residues). Residues 157-169 (PPPSPQDPDPKPA) are compositionally biased toward pro residues. Over residues 196 to 205 (KLKEESRDEE) the composition is skewed to basic and acidic residues.

The chain is LysM and putative peptidoglycan-binding domain-containing protein 2 (Lysmd2) from Mus musculus (Mouse).